The following is a 175-amino-acid chain: Ribosome maturation factor RimM (175 aa).

The 80-residue stretch at 96-175 folds into the PRC barrel domain; it reads DGDYYWKDLI…IIKVDWDPEF (80 aa).

It belongs to the RimM family. Binds ribosomal protein uS19.

It is found in the cytoplasm. Its function is as follows. An accessory protein needed during the final step in the assembly of 30S ribosomal subunit, possibly for assembly of the head region. Essential for efficient processing of 16S rRNA. May be needed both before and after RbfA during the maturation of 16S rRNA. It has affinity for free ribosomal 30S subunits but not for 70S ribosomes. This is Ribosome maturation factor RimM from Baumannia cicadellinicola subsp. Homalodisca coagulata.